Consider the following 218-residue polypeptide: NAD(P)H-quinone oxidoreductase subunit I (218 aa).

4Fe-4S ferredoxin-type domains follow at residues 55-84 (GRIH…VDWV) and 95-124 (RNYS…MTEE). Residues Cys64, Cys67, Cys70, Cys74, Cys104, Cys107, Cys110, and Cys114 each contribute to the [4Fe-4S] cluster site. The disordered stretch occupies residues 192–218 (LSLQQDSLQGDEGESLQDAPDQDQPKG).

The protein belongs to the complex I 23 kDa subunit family. NDH-1 is composed of at least 11 different subunits. It depends on [4Fe-4S] cluster as a cofactor.

The protein resides in the cellular thylakoid membrane. It catalyses the reaction a plastoquinone + NADH + (n+1) H(+)(in) = a plastoquinol + NAD(+) + n H(+)(out). The catalysed reaction is a plastoquinone + NADPH + (n+1) H(+)(in) = a plastoquinol + NADP(+) + n H(+)(out). In terms of biological role, NDH-1 shuttles electrons from an unknown electron donor, via FMN and iron-sulfur (Fe-S) centers, to quinones in the respiratory and/or the photosynthetic chain. The immediate electron acceptor for the enzyme in this species is believed to be plastoquinone. Couples the redox reaction to proton translocation, and thus conserves the redox energy in a proton gradient. This chain is NAD(P)H-quinone oxidoreductase subunit I, found in Prochlorococcus marinus (strain MIT 9303).